Here is a 223-residue protein sequence, read N- to C-terminus: MAGNKGRGRAAYTFNIEAVGFSRGEKLPDVVLKPPPLFPDTDYKPVPLKTGEDEDYMLALKQELRETVKRLPYFIEPPEEKQDDIERYSKRYMKVYKEEWVPDWRRLPREMMPRKKCKKGDPKSKPSKAAAKATSLINSADVLKTIEELEKRGEGERSDEENEEKEGSKEKDKDDEEDGEEDAEQEDYDEEEQEEENDYINSYFDNGDDFGVDSDDNMDEATY.

Basic and acidic residues predominate over residues 111 to 124 (MMPRKKCKKGDPKS). The tract at residues 111–223 (MMPRKKCKKG…SDDNMDEATY (113 aa)) is disordered. A Phosphothreonine modification is found at Thr-134. Basic and acidic residues predominate over residues 144–156 (KTIEELEKRGEGE). Ser-158 is subject to Phosphoserine. Composition is skewed to acidic residues over residues 173–198 (KDDE…EEND) and 206–223 (NGDD…EATY).

It belongs to the eukaryotic RPC7 RNA polymerase subunit family. In terms of assembly, component of the RNA polymerase III complex consisting of 17 subunits: a ten-subunit horseshoe-shaped catalytic core composed of POLR3A/RPC1, POLR3B/RPC2, POLR1C/RPAC1, POLR1D/RPAC2, POLR3K/RPC10, POLR2E/RPABC1, POLR2F/RPABC2, POLR2H/RPABC3, POLR2K/RPABC4 and POLR2L/RPABC5; a mobile stalk composed of two subunits POLR3H/RPC8 and CRCP/RPC9, protruding from the core and functioning primarily in transcription initiation; and additional subunits homologous to general transcription factors of the RNA polymerase II machinery, POLR3C/RPC3-POLR3F/RPC6-POLR3G/RPC7 heterotrimer required for transcription initiation and POLR3D/RPC4-POLR3E/RPC5 heterodimer involved in both transcription initiation and termination. Directly interacts with POLR3C/RPC62. Also found in a trimeric complex with POLR3C/RPC3 and POLR3GL. As to expression, expressed at low levels in the liver.

It localises to the nucleus. The protein resides in the cytoplasm. DNA-dependent RNA polymerase catalyzes the transcription of DNA into RNA using the four ribonucleoside triphosphates as substrates. Specific peripheric component of RNA polymerase III (Pol III) which synthesizes small non-coding RNAs including 5S rRNA, snRNAs, tRNAs and miRNAs from at least 500 distinct genomic loci. Acts as a long tether that bridges POLR3C/RPC3-POLR3F/RPC6-POLR3G/RPC7 heterotrimer and the mobile stalk of Pol III, coordinating the dynamics of Pol III stalk and clamp modules during the transition from apo to elongation state. Pol III exists as two alternative complexes defined by the mutually exclusive incorporation of subunit POLR3G/RPC7alpha or POLR3GL/RPC7beta. POLR3G/RPC7alpha modulates Pol III transcriptome by specifically enhancing the transcription of snaR-A non-coding RNAs. At resting state, occupies the active site of apo Pol III and keeps Pol III in an autoinhibitory mode, preventing non-specific transcription. Pol III plays a key role in sensing and limiting infection by intracellular bacteria and DNA viruses. Acts as a nuclear and cytosolic DNA sensor involved in innate immune response. Can sense non-self dsDNA that serves as template for transcription into dsRNA. The non-self RNA polymerase III transcripts, such as Epstein-Barr virus-encoded RNAs (EBERs), induce type I interferon and NF-kappa-B through the RIG-I pathway. This chain is DNA-directed RNA polymerase III subunit RPC7 (Polr3g), found in Mus musculus (Mouse).